The primary structure comprises 115 residues: UPF0597 protein NTHI1023 (115 aa).

This sequence belongs to the UPF0597 family.

The chain is UPF0597 protein NTHI1023 from Haemophilus influenzae (strain 86-028NP).